Consider the following 225-residue polypeptide: 3-dehydroquinate dehydratase (225 aa).

Residues S6, E30–R32, and R62 each bind 3-dehydroquinate. The active-site Proton donor/acceptor is the H118. K143 functions as the Schiff-base intermediate with substrate in the catalytic mechanism. 3-dehydroquinate contacts are provided by R186, S205, and Q209.

It belongs to the type-I 3-dehydroquinase family. As to quaternary structure, homodimer.

It catalyses the reaction 3-dehydroquinate = 3-dehydroshikimate + H2O. It participates in metabolic intermediate biosynthesis; chorismate biosynthesis; chorismate from D-erythrose 4-phosphate and phosphoenolpyruvate: step 3/7. In terms of biological role, involved in the third step of the chorismate pathway, which leads to the biosynthesis of aromatic amino acids. Catalyzes the cis-dehydration of 3-dehydroquinate (DHQ) and introduces the first double bond of the aromatic ring to yield 3-dehydroshikimate. This chain is 3-dehydroquinate dehydratase, found in Streptococcus pneumoniae (strain Hungary19A-6).